A 146-amino-acid polypeptide reads, in one-letter code: Snaclec agkisacutacin subunit B (146 aa).

The signal sequence occupies residues 1–23; that stretch reads MGRFIFVSFGLLVVFLSLSGTAA. A C-type lectin domain is found at 24–146; that stretch reads DCPSDWSSYE…TCSFVCKFQA (123 aa). Cystine bridges form between C25–C36, C53–C142, and C119–C134. S64 and E70 together coordinate Ca(2+).

Belongs to the snaclec family. Heterodimer of subunits A and B; disulfide-linked. As to expression, expressed by the venom gland.

It localises to the secreted. Its function is as follows. Anticoagulant protein which binds to the gamma-carboxyglutamic acid-domain regions of factor IX (F9) and factor X (F10) in the presence of calcium with a 1 to 1 stoichiometry. Also inhibits platelet aggregation by binding to platelet glycoprotein Ibalpha (GP1BA) and functioning as a blocker of von Willebrand factor (VWF). Is devoid of hemorrhagic and lethal activities. Possesses antithrombotic and thrombolytic activities. Also hydrolyzes the Aalpha-chain of fibrinogen (FGA). Does not affect the Bbeta-chain (FGB) and the gamma chain (FGG). The sequence is that of Snaclec agkisacutacin subunit B from Deinagkistrodon acutus (Hundred-pace snake).